We begin with the raw amino-acid sequence, 404 residues long: Clavilactone A biosynthesis cluster protein Y (404 aa).

Part of the gene cluster that mediates the biosynthesis of clavilactone A, a meroterpenoid that features a unique benzo-fused ten-membered carbocyclic ring unit with an alpha,beta-epoxy-gamma-lactone moiety, forming an intriguing 10/5/3 tricyclic nested skeleton. ClaR, ClaS and ClaT are sufficient to produce clavilactone A and the function of claY, if any, has still to be identified. The biosynthesis begins with the prenyltransferase claS that transfers geranyl pyrophosphate (GPP) to hydroquinone to produces geranylhydroquinon. The cytochrome P450 monooxygenase claR then catalyzes the diradical coupling reaction between the intramolecular hydroquinone and allyl moieties to form the benzo-fused ten-membered carbocyclic ring unit of wigantol. Finally the cytochrome P450 monooxygenase claT exquisitely and stereoselectively assembles the alpha,beta-epoxy-gamma-lactone moiety, producing clavilactone A via arnebinol A. The protein is Clavilactone A biosynthesis cluster protein Y of Ampulloclitocybe clavipes (Club foot).